The following is a 189-amino-acid chain: Keratin-associated protein 5-2 (189 aa).

8 tandem repeats follow at residues 21-24, 27-30, 33-36, 134-137, 144-147, 159-162, 169-172, and 179-182. Residues 27–182 are 8 X 4 AA repeats of C-C-X-P; sequence CCKPVCCCVP…CCCQSSCCAP (156 aa).

This sequence belongs to the KRTAP type 5 family. Interacts with hair keratins.

In terms of biological role, in the hair cortex, hair keratin intermediate filaments are embedded in an interfilamentous matrix, consisting of hair keratin-associated protein (KRTAP), which are essential for the formation of a rigid and resistant hair shaft through their extensive disulfide bond cross-linking with abundant cysteine residues of hair keratins. The matrix proteins include the high-sulfur and high-glycine-tyrosine keratins. This is Keratin-associated protein 5-2 from Mus musculus (Mouse).